The sequence spans 93 residues: Cobalt transport protein CbiN (93 aa).

The next 2 helical transmembrane spans lie at 5–25 (LMLL…NHGG) and 63–83 (LLFT…LGYC).

It belongs to the CbiN family. In terms of assembly, forms an energy-coupling factor (ECF) transporter complex composed of an ATP-binding protein (A component, CbiO), a transmembrane protein (T component, CbiQ) and 2 possible substrate-capture proteins (S components, CbiM and CbiN) of unknown stoichimetry.

It localises to the cell inner membrane. The protein operates within cofactor biosynthesis; adenosylcobalamin biosynthesis. In terms of biological role, part of the energy-coupling factor (ECF) transporter complex CbiMNOQ involved in cobalt import. The protein is Cobalt transport protein CbiN of Salmonella agona (strain SL483).